A 209-amino-acid polypeptide reads, in one-letter code: Bcl-2 homologous antagonist/killer (209 aa).

The interval 1–28 (MASGQGPGPPKVGCDESPSPSEQQVAQD) is disordered. A2 carries the N-acetylalanine modification. The span at 18 to 27 (PSPSEQQVAQ) shows a compositional bias: polar residues. Positions 72 to 86 (VGRQLALIGDDINRR) match the BH3 motif. A BH1 motif is present at residues 115–134 (SLFKSGISWGRVVALLGFGY). Zn(2+) is bound by residues D158 and H162. The BH2 signature appears at 167–182 (RWIAQRGGWVAALNFR). Residues 186–203 (ILTVMVIFGVVLLGQFVV) form a helical membrane-spanning segment.

This sequence belongs to the Bcl-2 family. As to quaternary structure, homodimer. Formation of the homodimer is zinc-dependent. Forms heterodimers with BCL2 and BCL2L1 isoform Bcl-X(L). Forms heterooligomers with BAX. Interacts with BCL2A1. Interacts withRTL10/BOP. Interacts with VDAC1. Interacts with GIMAP3/IAN4 and GIMAP5/IAN5. In terms of assembly, (Microbial infection) Interacts with gamma-herpesvirus 68 protein vBCL2. As to expression, widely expressed.

The protein resides in the mitochondrion outer membrane. Its function is as follows. In the presence of an appropriate stimulus, accelerates programmed cell death by binding to, and antagonizing the anti-apoptotic action of BCL2. This chain is Bcl-2 homologous antagonist/killer (Bak1), found in Mus musculus (Mouse).